The following is a 361-amino-acid chain: Chorismate synthase (361 aa).

The segment covering 40-49 (DLQHDLDRRR) has biased composition (basic and acidic residues). Positions 40-60 (DLQHDLDRRRPGTSRHTTQRR) are disordered. NADP(+) is bound by residues R48 and R54. Residues 125 to 127 (RSS), 237 to 238 (NA), G277, 292 to 296 (KPTSS), and R318 contribute to the FMN site.

The protein belongs to the chorismate synthase family. In terms of assembly, homotetramer. It depends on FMNH2 as a cofactor.

It catalyses the reaction 5-O-(1-carboxyvinyl)-3-phosphoshikimate = chorismate + phosphate. Its pathway is metabolic intermediate biosynthesis; chorismate biosynthesis; chorismate from D-erythrose 4-phosphate and phosphoenolpyruvate: step 7/7. Functionally, catalyzes the anti-1,4-elimination of the C-3 phosphate and the C-6 proR hydrogen from 5-enolpyruvylshikimate-3-phosphate (EPSP) to yield chorismate, which is the branch point compound that serves as the starting substrate for the three terminal pathways of aromatic amino acid biosynthesis. This reaction introduces a second double bond into the aromatic ring system. The chain is Chorismate synthase from Chromohalobacter salexigens (strain ATCC BAA-138 / DSM 3043 / CIP 106854 / NCIMB 13768 / 1H11).